The primary structure comprises 104 residues: Nucleoid-associated protein Bsph_0039 (104 aa).

Residues 1–12 show a composition bias toward low complexity; the sequence is MRGMGNMQGMMK. The interval 1 to 22 is disordered; the sequence is MRGMGNMQGMMKKMQKMQKEMM.

This sequence belongs to the YbaB/EbfC family. In terms of assembly, homodimer.

Its subcellular location is the cytoplasm. The protein resides in the nucleoid. In terms of biological role, binds to DNA and alters its conformation. May be involved in regulation of gene expression, nucleoid organization and DNA protection. This Lysinibacillus sphaericus (strain C3-41) protein is Nucleoid-associated protein Bsph_0039.